The sequence spans 476 residues: Bifunctional protein HldE (476 aa).

Residues 1–318 (MKVTLPDFRR…ENAIRGRAET (318 aa)) are ribokinase. Position 195–198 (195–198 (NLSE)) interacts with ATP. Aspartate 264 is an active-site residue. Residues 344–476 (MTNGIFDILH…IIQSIKNGLG (133 aa)) form a cytidylyltransferase region.

This sequence in the N-terminal section; belongs to the carbohydrate kinase PfkB family. It in the C-terminal section; belongs to the cytidylyltransferase family. Homodimer.

The catalysed reaction is D-glycero-beta-D-manno-heptose 7-phosphate + ATP = D-glycero-beta-D-manno-heptose 1,7-bisphosphate + ADP + H(+). It carries out the reaction D-glycero-beta-D-manno-heptose 1-phosphate + ATP + H(+) = ADP-D-glycero-beta-D-manno-heptose + diphosphate. Its pathway is nucleotide-sugar biosynthesis; ADP-L-glycero-beta-D-manno-heptose biosynthesis; ADP-L-glycero-beta-D-manno-heptose from D-glycero-beta-D-manno-heptose 7-phosphate: step 1/4. It participates in nucleotide-sugar biosynthesis; ADP-L-glycero-beta-D-manno-heptose biosynthesis; ADP-L-glycero-beta-D-manno-heptose from D-glycero-beta-D-manno-heptose 7-phosphate: step 3/4. Functionally, catalyzes the phosphorylation of D-glycero-D-manno-heptose 7-phosphate at the C-1 position to selectively form D-glycero-beta-D-manno-heptose-1,7-bisphosphate. Its function is as follows. Catalyzes the ADP transfer from ATP to D-glycero-beta-D-manno-heptose 1-phosphate, yielding ADP-D-glycero-beta-D-manno-heptose. The protein is Bifunctional protein HldE of Yersinia enterocolitica serotype O:8 / biotype 1B (strain NCTC 13174 / 8081).